The chain runs to 342 residues: Phenylalanine--tRNA ligase alpha subunit (342 aa).

Glu260 lines the Mg(2+) pocket.

Belongs to the class-II aminoacyl-tRNA synthetase family. Phe-tRNA synthetase alpha subunit type 1 subfamily. As to quaternary structure, tetramer of two alpha and two beta subunits. The cofactor is Mg(2+).

The protein localises to the cytoplasm. It catalyses the reaction tRNA(Phe) + L-phenylalanine + ATP = L-phenylalanyl-tRNA(Phe) + AMP + diphosphate + H(+). This Mycobacterium avium (strain 104) protein is Phenylalanine--tRNA ligase alpha subunit.